The chain runs to 695 residues: NADPH--cytochrome P450 reductase (695 aa).

Over 1–8 the chain is Lumenal; sequence MAQLDTLD. Residues 9-31 traverse the membrane as a helical segment; the sequence is LVVLVVLLVGSAAYFTKGTYWAV. Residues 32 to 695 are Cytoplasmic-facing; sequence PKDPYAASGP…SGSYQEDVWS (664 aa). In terms of domain architecture, Flavodoxin-like spans 66 to 221; it reads CVIFYGSQTG…DFLAWKEPMW (156 aa). FMN-binding positions include 72–77, 123–126, 169–178, and D204; these read SQTGTA, ATYG, and LGNNTYEHYQ. The region spanning 277–538 is the FAD-binding FR-type domain; it reads HNPFIAPIVE…HVRHSNFKLP (262 aa). R296 contacts NADP(+). FAD is bound by residues 451-454, 469-471, and 486-489; these read RYYS, TAV, and GVTT. NADP(+) is bound by residues T552, 614–615, 620–624, and E656; these read SR and KVYVQ. W694 contributes to the FAD binding site.

Belongs to the NADPH--cytochrome P450 reductase family. This sequence in the N-terminal section; belongs to the flavodoxin family. The protein in the C-terminal section; belongs to the flavoprotein pyridine nucleotide cytochrome reductase family. It depends on FAD as a cofactor. FMN is required as a cofactor.

The protein resides in the endoplasmic reticulum membrane. The protein localises to the mitochondrion outer membrane. It is found in the cell membrane. It catalyses the reaction 2 oxidized [cytochrome P450] + NADPH = 2 reduced [cytochrome P450] + NADP(+) + H(+). This enzyme is required for electron transfer from NADP to cytochrome P450 in microsomes. It can also provide electron transfer to heme oxygenase and cytochrome B5. Involved in ergosterol biosynthesis. This is NADPH--cytochrome P450 reductase from Aspergillus terreus (strain NIH 2624 / FGSC A1156).